Consider the following 715-residue polypeptide: Bromodomain-containing protein DDB_G0278469 (715 aa).

Disordered regions lie at residues 18 to 46 and 186 to 425; these read EDNN…NRNA and QQQK…ETKQ. 5 stretches are compositionally biased toward low complexity: residues 20 to 45, 186 to 204, 215 to 227, 234 to 254, and 261 to 281; these read NNNN…PNRN, QQQK…PTAQ, LTAA…TTTT, TAPP…TTKK, and SKSN…TTIT. Residues 307–316 show a composition bias toward basic and acidic residues; sequence KPKEQKKDIM. Residues 322-368 adopt a coiled-coil conformation; sequence SKKANTHEEKEEGESEEEEEEEEEEEEEEEEEEEEEQLEDKQKQTKT. The segment covering 332–359 has biased composition (acidic residues); it reads EEGESEEEEEEEEEEEEEEEEEEEEEQL. The span at 366 to 389 shows a compositional bias: polar residues; it reads TKTPISQNKSASSNIKPLSKTSKS. The segment covering 405–414 has biased composition (low complexity); sequence KKITSTTVTR. Residues 437–470 are a coiled coil; that stretch reads KQQTQEEIEQELKLESIRKRIEQFINKFEKEIND. The Bromo domain maps to 474-599; it reads KDLDEGKRKI…IQFYKSLLET (126 aa). The tract at residues 653–715 is disordered; sequence LVDEDEDECL…SEEEDQEATN (63 aa). A compositionally biased stretch (polar residues) spans 662–672; the sequence is LNNQNNPTTYD. A compositionally biased stretch (acidic residues) spans 684 to 715; sequence QESDEESDEESDEESDEERDQLSEEEDQEATN.

This Dictyostelium discoideum (Social amoeba) protein is Bromodomain-containing protein DDB_G0278469.